Here is a 384-residue protein sequence, read N- to C-terminus: Mannitol-1-phosphate 5-dehydrogenase (384 aa).

3-14 (AVHFGAGNIGRG) contributes to the NAD(+) binding site.

It belongs to the mannitol dehydrogenase family. As to quaternary structure, monomer.

The catalysed reaction is D-mannitol 1-phosphate + NAD(+) = beta-D-fructose 6-phosphate + NADH + H(+). The sequence is that of Mannitol-1-phosphate 5-dehydrogenase (mtlD) from Enterococcus faecalis (strain ATCC 700802 / V583).